The primary structure comprises 537 residues: Myosin-binding protein H (537 aa).

The segment covering 1–25 (MTGKTAPAAAKKAPAAKKAPAPASK) has biased composition (low complexity). The disordered stretch occupies residues 1 to 138 (MTGKTAPAAA…KPKEEPPSVP (138 aa)). The segment covering 26 to 69 (KAPEPAPKEKPAPTPKEGHAPTPKEEHAPPPKEEHAPPPKEEHA) has biased composition (basic and acidic residues). The segment covering 87–104 (EQPAAPAAEHAPTPTHEA) has biased composition (low complexity). The segment covering 112-124 (PPPAAPAEAPAPE) has biased composition (pro residues). The Fibronectin type-III 1 domain occupies 137–232 (VPLSLAVEEV…LEQPVLIREI (96 aa)). Positions 236–324 (PRIRLPRQLR…NGAEDKAILD (89 aa)) constitute an Ig-like C2-type 1 domain. The 96-residue stretch at 333-428 (PPQNLKLVDV…AAGVAHIKKT (96 aa)) folds into the Fibronectin type-III 2 domain. Residues 444-528 (PKFTQPLTDR…VNPLGEASVD (85 aa)) enclose the Ig-like C2-type 2 domain.

The protein belongs to the immunoglobulin superfamily. MyBP family. Skeletal muscle. Seems to be also expressed in the slow tonic ald muscle. Not detected in gizzard or heart.

Functionally, binds to myosin; probably involved in interaction with thick myofilaments in the A-band. The sequence is that of Myosin-binding protein H (MYBPH) from Gallus gallus (Chicken).